Reading from the N-terminus, the 156-residue chain is ATP synthase subunit b (156 aa).

Residues L7 to L29 form a helical membrane-spanning segment.

This sequence belongs to the ATPase B chain family. F-type ATPases have 2 components, F(1) - the catalytic core - and F(0) - the membrane proton channel. F(1) has five subunits: alpha(3), beta(3), gamma(1), delta(1), epsilon(1). F(0) has three main subunits: a(1), b(2) and c(10-14). The alpha and beta chains form an alternating ring which encloses part of the gamma chain. F(1) is attached to F(0) by a central stalk formed by the gamma and epsilon chains, while a peripheral stalk is formed by the delta and b chains.

The protein localises to the cell inner membrane. F(1)F(0) ATP synthase produces ATP from ADP in the presence of a proton or sodium gradient. F-type ATPases consist of two structural domains, F(1) containing the extramembraneous catalytic core and F(0) containing the membrane proton channel, linked together by a central stalk and a peripheral stalk. During catalysis, ATP synthesis in the catalytic domain of F(1) is coupled via a rotary mechanism of the central stalk subunits to proton translocation. In terms of biological role, component of the F(0) channel, it forms part of the peripheral stalk, linking F(1) to F(0). This chain is ATP synthase subunit b, found in Shewanella denitrificans (strain OS217 / ATCC BAA-1090 / DSM 15013).